We begin with the raw amino-acid sequence, 507 residues long: ATP synthase subunit alpha, chloroplastic (507 aa).

Gly170–Thr177 serves as a coordination point for ATP.

This sequence belongs to the ATPase alpha/beta chains family. As to quaternary structure, F-type ATPases have 2 components, CF(1) - the catalytic core - and CF(0) - the membrane proton channel. CF(1) has five subunits: alpha(3), beta(3), gamma(1), delta(1), epsilon(1). CF(0) has four main subunits: a, b, b' and c.

It is found in the plastid. Its subcellular location is the chloroplast thylakoid membrane. It carries out the reaction ATP + H2O + 4 H(+)(in) = ADP + phosphate + 5 H(+)(out). Its function is as follows. Produces ATP from ADP in the presence of a proton gradient across the membrane. The alpha chain is a regulatory subunit. This chain is ATP synthase subunit alpha, chloroplastic, found in Nymphaea alba (White water-lily).